The sequence spans 508 residues: DNA-directed RNA polymerase subunit Rpo1C (508 aa).

The tract at residues 1 to 123 (MASLLWRDTS…EIKEKYGENL (123 aa)) is unknown. Residues 124–508 (SEDVQKVLDD…IYKGYPKTKK (385 aa)) are DNA-directed RNA polymerase subunit Rpo1C.

Belongs to the RNA polymerase beta' chain family. Part of the RNA polymerase complex.

Its subcellular location is the cytoplasm. It carries out the reaction RNA(n) + a ribonucleoside 5'-triphosphate = RNA(n+1) + diphosphate. In terms of biological role, DNA-dependent RNA polymerase (RNAP) catalyzes the transcription of DNA into RNA using the four ribonucleoside triphosphates as substrates. Forms part of the jaw domain. The chain is DNA-directed RNA polymerase subunit Rpo1C from Thermoplasma acidophilum (strain ATCC 25905 / DSM 1728 / JCM 9062 / NBRC 15155 / AMRC-C165).